The sequence spans 358 residues: MRKIIHIDMDCYFAAVEMRDFPEYRGKPLAVGGSSDRRGVISTCSYEARKFGVRSAMATAYAFKLCPDLILVPGRMQVYKDVSLQIREIFSRYTQLVEPLSLDEAYLDVSECQQYKGSATLIAQAIRRDILAETGLTASAGIAPVKFLAKVASDLNKPNGQYVITPETLPEFVKTLSLRKIPGVGKVTAEKLSSLGLNTCGDVQAYSKPELLARFGKFGGVLIERSQGIDERGISADRERKSVGVETTLAKDIYSLEQCQQVMPGLIQELALRLSRSAKERKIHKQVVKLKFNDFKQTTIEHRSDEVSIVMFYDLLAQAMARQEGRGIRLLGISVGLADSILAVSEIPNAQTQLDLAL.

The 182-residue stretch at isoleucine 4–glycine 185 folds into the UmuC domain. 2 residues coordinate Mg(2+): aspartate 8 and aspartate 103. Glutamate 104 is an active-site residue.

This sequence belongs to the DNA polymerase type-Y family. In terms of assembly, monomer. It depends on Mg(2+) as a cofactor.

It is found in the cytoplasm. It catalyses the reaction DNA(n) + a 2'-deoxyribonucleoside 5'-triphosphate = DNA(n+1) + diphosphate. Its function is as follows. Poorly processive, error-prone DNA polymerase involved in untargeted mutagenesis. Copies undamaged DNA at stalled replication forks, which arise in vivo from mismatched or misaligned primer ends. These misaligned primers can be extended by PolIV. Exhibits no 3'-5' exonuclease (proofreading) activity. May be involved in translesional synthesis, in conjunction with the beta clamp from PolIII. In Shewanella baltica (strain OS155 / ATCC BAA-1091), this protein is DNA polymerase IV.